The chain runs to 534 residues: Cytochrome c oxidase subunit 1 (534 aa).

A helical transmembrane segment spans residues 16-36 (VLYFIFAIFCGMAGTAMSLII). Positions 39, 42, and 44 each coordinate Ca(2+). Helical transmembrane passes span 57 to 77 (VLVV…ALIG), 101 to 121 (ISFW…LVES), 147 to 167 (AIFA…NFIV), 182 to 202 (LPLF…SLPV), 235 to 255 (LFWF…FGII), and 267 to 287 (VFGE…GFLV). Position 62 (His62) interacts with Fe(II)-heme a. Residue His241 coordinates Cu cation. Positions 241-245 (HPEVY) form a cross-link, 1'-histidyl-3'-tyrosine (His-Tyr). Residue Tyr245 coordinates O2. Positions 290 and 291 each coordinate Cu cation. 2 consecutive transmembrane segments (helical) span residues 310 to 330 (MIIA…IYGG) and 338 to 358 (MLYA…GVAL). Residues His368 and Asp369 each coordinate Mg(2+). The next 2 helical transmembrane spans lie at 372–392 (YVVG…LFAG) and 412–432 (IQFW…HFLG). Residue His376 participates in heme a3 binding. Position 378 (His378) interacts with Fe(II)-heme a. Position 441 (Pro441) interacts with Ca(2+). A helical membrane pass occupies residues 452-472 (YVASIGSIIAVFSLFLFIYIL).

This sequence belongs to the heme-copper respiratory oxidase family. As to quaternary structure, component of the cytochrome c oxidase (complex IV, CIV), a multisubunit enzyme composed of a catalytic core of 3 subunits and several supernumerary subunits. The complex exists as a monomer or a dimer and forms supercomplexes (SCs) in the inner mitochondrial membrane with ubiquinol-cytochrome c oxidoreductase (cytochrome b-c1 complex, complex III, CIII). Heme serves as cofactor. It depends on Cu cation as a cofactor.

It localises to the mitochondrion inner membrane. The catalysed reaction is 4 Fe(II)-[cytochrome c] + O2 + 8 H(+)(in) = 4 Fe(III)-[cytochrome c] + 2 H2O + 4 H(+)(out). It functions in the pathway energy metabolism; oxidative phosphorylation. In terms of biological role, component of the cytochrome c oxidase, the last enzyme in the mitochondrial electron transport chain which drives oxidative phosphorylation. The respiratory chain contains 3 multisubunit complexes succinate dehydrogenase (complex II, CII), ubiquinol-cytochrome c oxidoreductase (cytochrome b-c1 complex, complex III, CIII) and cytochrome c oxidase (complex IV, CIV), that cooperate to transfer electrons derived from NADH and succinate to molecular oxygen, creating an electrochemical gradient over the inner membrane that drives transmembrane transport and the ATP synthase. Cytochrome c oxidase is the component of the respiratory chain that catalyzes the reduction of oxygen to water. Electrons originating from reduced cytochrome c in the intermembrane space (IMS) are transferred via the dinuclear copper A center (CU(A)) of subunit 2 and heme A of subunit 1 to the active site in subunit 1, a binuclear center (BNC) formed by heme A3 and copper B (CU(B)). The BNC reduces molecular oxygen to 2 water molecules using 4 electrons from cytochrome c in the IMS and 4 protons from the mitochondrial matrix. The chain is Cytochrome c oxidase subunit 1 (COX1) from Kluyveromyces lactis (strain ATCC 8585 / CBS 2359 / DSM 70799 / NBRC 1267 / NRRL Y-1140 / WM37) (Yeast).